A 153-amino-acid chain; its full sequence is ORM1-like protein 2 (153 aa).

The Cytoplasmic portion of the chain corresponds to methionine 1–glycine 21. Transmembrane regions (helical) follow at residues isoleucine 22–phenylalanine 42 and phenylalanine 43–phenylalanine 63. Residues leucine 64–serine 105 lie on the Cytoplasmic side of the membrane. A helical membrane pass occupies residues proline 106 to isoleucine 126. At asparagine 127 to tyrosine 153 the chain is on the extracellular side.

The protein belongs to the ORM family. As to quaternary structure, ceramide-sensitive subunit of the serine palmitoyltransferase (SPT) complex, which is also composed of SPTLC1, SPTLC2/3 and SPTSSA/B. In terms of tissue distribution, widely expressed. Expressed in adult and fetal heart, brain, lung, liver, skeletal muscle and kidney. Expressed in adult pancreas and placenta and in fetal spleen abd thymus.

It localises to the endoplasmic reticulum membrane. Its function is as follows. Plays an essential role in the homeostatic regulation of sphingolipid de novo biosynthesis by modulating the activity of the serine palmitoyltransferase (SPT) in response to ceramide levels. When complexed to SPT, the binding of ceramides to its N-terminus stabilizes a conformation that block SPT substrate entry, hence preventing SPT catalytic activity. Through this mechanism, maintains ceramide levels at sufficient concentrations for the production of complex sphingolipids, but which prevents the accumulation of ceramides to levels that trigger apoptosis. The chain is ORM1-like protein 2 (ORMDL2) from Homo sapiens (Human).